The chain runs to 347 residues: Intracellular hyaluronan-binding protein 4 (347 aa).

Disordered stretches follow at residues 39–221 (GTEK…PSET) and 298–347 (FGSL…PALA). Composition is skewed to basic and acidic residues over residues 61–71 (VKKESQRDRKT), 83–107 (PGHEVVEEPIQRRVTFDRKFNDAEK), 116–125 (RPVDVLDRPA), and 146–174 (DGFDQRGKREFERHSGSDRSSVRSEEKRS). The segment covering 199–213 (EVTENEETQEAVETD) has biased composition (acidic residues). Gly residues predominate over residues 307-319 (GGRGGRGGRGRGG). Acidic residues predominate over residues 338-347 (DDPEDFPALA).

This sequence belongs to the SERBP1-HABP4 family. In terms of assembly, associates with ribosomes; promoting ribosome stabilization. Interacts with eef2/eEF2; promoting ribosome stabilization.

It localises to the nucleus. The protein localises to the cytoplasm. The protein resides in the stress granule. Its subcellular location is the nucleolus. It is found in the nucleus speckle. It localises to the cajal body. In terms of biological role, ribosome-binding protein that promotes ribosome hibernation, a process during which ribosomes are stabilized in an inactive state and preserved from proteasomal degradation. Acts via its association with eef2/eEF2 factor at the A-site of the ribosome, promoting ribosome stabilization in an inactive state compatible with storage. Plays a key role in ribosome hibernation in the mature egg by promoting ribosome stabilization. Ribosomes, which are produced in large quantities during oogenesis, are stored and translationally repressed in the egg and early embryo. The polypeptide is Intracellular hyaluronan-binding protein 4 (Danio rerio (Zebrafish)).